Reading from the N-terminus, the 165-residue chain is UPF0303 protein BceJ2315_15790 (165 aa).

Belongs to the UPF0303 family.

The sequence is that of UPF0303 protein BceJ2315_15790 from Burkholderia cenocepacia (strain ATCC BAA-245 / DSM 16553 / LMG 16656 / NCTC 13227 / J2315 / CF5610) (Burkholderia cepacia (strain J2315)).